Consider the following 1265-residue polypeptide: Kinesin-related protein 13 (1265 aa).

The 328-residue stretch at 23 to 350 (NIQAFVRVRP…LEYALKAKNI (328 aa)) folds into the Kinesin motor domain. An ATP-binding site is contributed by 106–113 (GQTGTGKT). The stretch at 331 to 459 (LVNLEETINT…KQQQEKQKFI (129 aa)) forms a coiled coil. Disordered stretches follow at residues 918 to 1026 (KSGE…QPLI), 1085 to 1119 (SLVN…LSQL), 1127 to 1146 (LQPQ…LNGS), 1158 to 1214 (LLDD…NQSL), and 1245 to 1265 (FGGG…TPLK). Over residues 930-951 (IPSPISTSSSSSSSSSISSIHS) the composition is skewed to low complexity. 3 stretches are compositionally biased toward polar residues: residues 960-980 (HQSI…SINC), 1003-1026 (LNLN…QPLI), and 1085-1097 (SLVN…SPKL). 2 stretches are compositionally biased toward low complexity: residues 1100 to 1119 (QKIL…LSQL) and 1128 to 1146 (QPQQ…LNGS). The span at 1158-1169 (LLDDDSDSDNSD) shows a compositional bias: acidic residues. Over residues 1174 to 1195 (SLLSSNKKSSRASKNAVVSKKV) the composition is skewed to low complexity. The span at 1250–1265 (TISSKLKSLKQQTPLK) shows a compositional bias: polar residues.

Belongs to the TRAFAC class myosin-kinesin ATPase superfamily. Kinesin family. BimC subfamily.

The protein localises to the cytoplasm. Its subcellular location is the cytoskeleton. Microtubule-associated force-producing protein that plays a role in organelle transport. Its motor activity is directed toward the microtubule's plus end. Cooperates with dynein to control the spindle elongation rate, but is dispensable for mitosis. This is Kinesin-related protein 13 (kif13) from Dictyostelium discoideum (Social amoeba).